The primary structure comprises 851 residues: Probable disease resistance protein At1g15890 (851 aa).

The NB-ARC domain maps to 139–441 (AEKIPAPKVE…CEGFIDGNED (303 aa)). 181–188 (GMGGVGKT) contributes to the ATP binding site. LRR repeat units lie at residues 514-535 (SLRRMSLMCNQIANISSSSNSP), 536-557 (NLSTLLLQNNKLVHISCDFFRF), 560-582 (ALVVLDLSRNSSLSSLPEAISKL), 584-605 (SLQYINLSTTGIKWLPVSFKEL), and 607-629 (KLIHLNLEFTDELESIVGIATSL).

It belongs to the disease resistance NB-LRR family.

In terms of biological role, probable disease resistance protein. The polypeptide is Probable disease resistance protein At1g15890 (Arabidopsis thaliana (Mouse-ear cress)).